The following is a 185-amino-acid chain: Threonylcarbamoyl-AMP synthase (185 aa).

One can recognise a YrdC-like domain in the interval 4-185 (SWRVQQAARE…LATGNIVRPA (182 aa)).

This sequence belongs to the SUA5 family. TsaC subfamily.

It localises to the cytoplasm. It carries out the reaction L-threonine + hydrogencarbonate + ATP = L-threonylcarbamoyladenylate + diphosphate + H2O. Functionally, required for the formation of a threonylcarbamoyl group on adenosine at position 37 (t(6)A37) in tRNAs that read codons beginning with adenine. Catalyzes the conversion of L-threonine, HCO(3)(-)/CO(2) and ATP to give threonylcarbamoyl-AMP (TC-AMP) as the acyladenylate intermediate, with the release of diphosphate. This Pseudomonas fluorescens (strain Pf0-1) protein is Threonylcarbamoyl-AMP synthase.